The primary structure comprises 427 residues: Enolase (427 aa).

Gln163 is a binding site for (2R)-2-phosphoglycerate. Glu205 (proton donor) is an active-site residue. Residues Asp242, Glu285, and Asp312 each contribute to the Mg(2+) site. Residues Lys337, Arg366, Ser367, and Lys388 each contribute to the (2R)-2-phosphoglycerate site. The active-site Proton acceptor is the Lys337.

This sequence belongs to the enolase family. The cofactor is Mg(2+).

The protein resides in the cytoplasm. The protein localises to the secreted. It is found in the cell surface. The catalysed reaction is (2R)-2-phosphoglycerate = phosphoenolpyruvate + H2O. The protein operates within carbohydrate degradation; glycolysis; pyruvate from D-glyceraldehyde 3-phosphate: step 4/5. Its function is as follows. Catalyzes the reversible conversion of 2-phosphoglycerate (2-PG) into phosphoenolpyruvate (PEP). It is essential for the degradation of carbohydrates via glycolysis. The sequence is that of Enolase from Rhodopseudomonas palustris (strain BisA53).